A 301-amino-acid chain; its full sequence is UDP-N-acetylenolpyruvoylglucosamine reductase 1 (301 aa).

The 168-residue stretch at 29-196 (KIGGPADILI…LEAEFQLQIG (168 aa)) folds into the FAD-binding PCMH-type domain. The active site involves Arg-174. Ser-225 acts as the Proton donor in catalysis. Residue Glu-295 is part of the active site.

It belongs to the MurB family. FAD is required as a cofactor.

It localises to the cytoplasm. It carries out the reaction UDP-N-acetyl-alpha-D-muramate + NADP(+) = UDP-N-acetyl-3-O-(1-carboxyvinyl)-alpha-D-glucosamine + NADPH + H(+). It participates in cell wall biogenesis; peptidoglycan biosynthesis. Cell wall formation. In Bacillus anthracis, this protein is UDP-N-acetylenolpyruvoylglucosamine reductase 1 (murB1).